Reading from the N-terminus, the 662-residue chain is MQLDNDSEFAKKIFNPNRAFAKQARIKNMCEYKDLVHEANEDYEHFWGELAKQKLTWFKPFDKVLNSDNAPFFKWFENGKINVSYNCIDRHLKDKKNKVAIIFEGEMGDYNVITYRKLHSEVNKTANLLKNEFNVKKGDRVIIYMPMIVESVYMMLACTRIGAIHSIVFAGFSPEALRDRINDAQAKLVITADGTFRKGKPYMLKPALDKALENNACPSVEKALIVIRNAKEIDYVRGRDFVYNEMVNYQSDKCEPEMMDSEDPLFLLYTSGSTGKPKGVQHSSAGYLLWAQMTMEWVFDIRDNDNFWCTADIGWITGHTYVVYGPLACGATTLILEGTMSYPDYGRWWRMIEEYRVDKFYTSPTAIRMLHAKGENEPSKYNLESLKVLGTVGEPINPTAWKWFYEKIGNSKCSIVDTWWQTETGGHIISPLPGATPIRASCATLPLPGIHAEVLNEDGTKTKPGEQGFLCITKPWPSMVRNIWGDEKRYIDSYFSQIKLNGEYVYLSGDGAIVDENGYITIIGRTDDIVNVSGHRIGTAEVESAISKHEMVAECAVVGIPDTIKGEGLFAFVVLCDGAKCNLGESLELLKEMNHILSVEIGKIAKLDNVMYVPGLPKTRSGKIMRRLLKSIAKKESITQDLSTLEDVNVVKEIMSIVQMEE.

CoA contacts are provided by residues 197–200 and T317; that span reads RKGK. ATP-binding positions include 393–395, 417–422, D510, and R525; these read GEP and DTWWQT. S533 contacts CoA. Residue R536 coordinates ATP. 2 residues coordinate Mg(2+): H549 and V552. K623 is modified (N6-acetyllysine).

The protein belongs to the ATP-dependent AMP-binding enzyme family. Mg(2+) is required as a cofactor. Acetylated. Deacetylation by the SIR2-homolog deacetylase activates the enzyme.

The catalysed reaction is acetate + ATP + CoA = acetyl-CoA + AMP + diphosphate. Catalyzes the conversion of acetate into acetyl-CoA (AcCoA), an essential intermediate at the junction of anabolic and catabolic pathways. AcsA undergoes a two-step reaction. In the first half reaction, AcsA combines acetate with ATP to form acetyl-adenylate (AcAMP) intermediate. In the second half reaction, it can then transfer the acetyl group from AcAMP to the sulfhydryl group of CoA, forming the product AcCoA. This chain is Acetyl-coenzyme A synthetase, found in Helicobacter pylori (strain G27).